Reading from the N-terminus, the 291-residue chain is Gamma-soluble NSF attachment protein (291 aa).

Belongs to the SNAP family.

The protein localises to the membrane. Functionally, required for vesicular transport between the endoplasmic reticulum and the Golgi apparatus. Binds to SNARE complex and then recruits NSF to disassemble it. The protein is Gamma-soluble NSF attachment protein (GSNAP) of Arabidopsis thaliana (Mouse-ear cress).